The sequence spans 463 residues: Probable glycosyltransferase 3 (463 aa).

The Cytoplasmic portion of the chain corresponds to 1 to 24 (MAVTGGGRPAVRQQAARGKQMQRT). The helical; Signal-anchor for type II membrane protein transmembrane segment at 25-47 (FNNVKITLICGFITLLVLRGTVG) threads the bilayer. Topologically, residues 48–463 (INLLTYGVGG…ALKMDAKIES (416 aa)) are lumenal. The segment at 82 to 125 (EIRSDTDDDDDDEEEEPLGVDASTTTTTNSTTTTATAARRRSSN) is disordered. Acidic residues predominate over residues 87–99 (TDDDDDDEEEEPL). A compositionally biased stretch (low complexity) spans 103–118 (ASTTTTTNSTTTTATA). Residues N110, N125, and N442 are each glycosylated (N-linked (GlcNAc...) asparagine).

The protein belongs to the glycosyltransferase 34 family.

It is found in the golgi apparatus membrane. Probable glycosyltransferase that may be involved in the biosynthesis of xyloglucan. The polypeptide is Probable glycosyltransferase 3 (Oryza sativa subsp. japonica (Rice)).